The chain runs to 432 residues: Major royal jelly protein 1 (432 aa).

The N-terminal stretch at 1–19 (MTRLFMLVCLGIVCQGTTG) is a signal peptide. N-linked (GlcNAc...) asparagine glycans are attached at residues Asn-28, Asn-144, and Asn-177. Disulfide bonds link Cys-118–Cys-150, Cys-132–Cys-195, and Cys-329–Cys-416. Pro-364 contributes to the 24-methylenecholesterol binding site. His-431 is subject to Histidine amide; atypical. Leucine amide; atypical is present on Leu-432.

This sequence belongs to the major royal jelly protein family. As to quaternary structure, is present in royal jelly in different forms: monomer (55 kDa), oligomeric subunit (ca. 287-420 kDa), and water-insoluble aggregates in sediment after interaction with fatty acids. Component of the apisin heterooligomer complex consisting of 4 copies of MRJP1 and 4 copies of apisimin, associated with 8 molecules of 24-methylenecholesterol; apisimin forms a bridge connecting two MRJP1 dimers. At low pH multiple apisin octamers stack to form filaments that increase the viscosity of royal jelly; these filaments may be stabilized by bound fatty acid chains. The mandibular gland, where royal jelly is produced, has low pH conditions favouring filament formation, while the higher pH of the insect midgut favors filament disassembly. Post-translationally, N-glycosylated on Asn-28, Asn-144 and Asn-177. Glycosylation is required to prevent apisin multimers from aggregating. In terms of processing, jellein-2 is probably processed to yield jellein-1 and jellein-4. Found in and secreted from the hypopharyngeal glands of the worker honey bee (at protein level); expression peaks at 12 days post eclosion. Expressed in the brains of worker bees (at protein level); found in antennal lobe, optical lobe and a subpopulation of Kenyon cells in the mushroom body. Found in the ommatidia of worker bees (at protein level). Expressed in the spermatheca of adult queen bees (at protein level); expression levels are higher in mated queens than in virgin queens. Expressed in queen bee ovaries and male drone testes.

It localises to the secreted. It is found in the cytoplasm. The protein resides in the cell projection. Its subcellular location is the rhabdomere. The protein localises to the cytoskeleton. Most abundant protein component of royal jelly, a substance produced in the hypopharyngeal gland containing proteins, free amino acids, fatty acids, sugars and other nutrients, which is fed to developing larvae by worker nurse bees. Major royal jelly proteins (Mrjps) are high in essential amino acids and probably have a nutritional function in larval food. All larvae are fed some royal jelly (also known as worker jelly) early in their development but it forms the principal source of nutrition for larvae destined to become queen bees. Induces the differentiation of honey bee larvae into queens through an Egfr-mediated signaling pathway. Promotes body size increase by activating p70 S6 kinase, stimulates ovary development by augmenting the titer of vitellogenin (Vg) and juvenile hormone, and reduces developmental time by increasing the activity of mitogen-activated protein kinase and inducing 20-hydroxyecdysone (ecdysterone, 20E) production. Together with apisimin forms the apisin complex that polymerizes at low pH, forming a fiber network and increasing the viscosity of royal jelly. The viscous royal Jelly placed in honeycomb cells containing larvae destined to become queens acts as both a food supply and an adhesive preventing larvae from falling out; queens are reared in special large cells oriented vertically. Produced in the spermatheca of adult queen bees, along with other major royal jelly proteins, where it may act as a nutrient supply for sperm stored by mated queens, or be involved in energy metabolism. Its function is as follows. Has antibacterial activity against the Gram-positive bacteria S.aureus ATCC 6535, S.saprophyticus and B.subtilis CCT2471, and the Gram-negative bacteria E.coli CCT1371, E.cloacae ATCC 23355, K.pneumoniae ATCC 13883 and P.aeruginosa ATCC 27853, and antifungal activity against C.albicans. Lack cytolytic activity and does not induce rat peritoneal mast cell degranulation. In terms of biological role, lacks antibacterial and antifungal activity. Lacks cytolytic activity and does not induce rat peritoneal mast cell degranulation. The protein is Major royal jelly protein 1 of Apis mellifera (Honeybee).